The following is a 286-amino-acid chain: Elongation factor Ts (286 aa).

The involved in Mg(2+) ion dislocation from EF-Tu stretch occupies residues 82–85 (TDFV). Residues 212 to 286 (VAAQTGQKVE…SPSKKGKKKK (75 aa)) form a disordered region. The segment covering 215–227 (QTGQKVEQPQAAQ) has biased composition (polar residues). Low complexity predominate over residues 253-269 (ETDSPAAETTTEPPKTT).

Belongs to the EF-Ts family.

The protein resides in the cytoplasm. Functionally, associates with the EF-Tu.GDP complex and induces the exchange of GDP to GTP. It remains bound to the aminoacyl-tRNA.EF-Tu.GTP complex up to the GTP hydrolysis stage on the ribosome. The sequence is that of Elongation factor Ts from Gloeothece citriformis (strain PCC 7424) (Cyanothece sp. (strain PCC 7424)).